The sequence spans 377 residues: Homoserine O-succinyltransferase (377 aa).

In terms of domain architecture, AB hydrolase-1 spans 50 to 358 (NAVLICHALS…PSSYGHDSFL (309 aa)). S156 serves as the catalytic Nucleophile. Residue R226 coordinates substrate. Catalysis depends on residues D321 and H354. Substrate is bound at residue D355.

The protein belongs to the AB hydrolase superfamily. MetX family. In terms of assembly, homodimer.

It is found in the cytoplasm. The enzyme catalyses L-homoserine + succinyl-CoA = O-succinyl-L-homoserine + CoA. Its pathway is amino-acid biosynthesis; L-methionine biosynthesis via de novo pathway; O-succinyl-L-homoserine from L-homoserine: step 1/1. In terms of biological role, transfers a succinyl group from succinyl-CoA to L-homoserine, forming succinyl-L-homoserine. The protein is Homoserine O-succinyltransferase of Nitrosomonas europaea (strain ATCC 19718 / CIP 103999 / KCTC 2705 / NBRC 14298).